Here is a 295-residue protein sequence, read N- to C-terminus: Bifunctional protein FolD 1 (295 aa).

Residues 165–167 (GKS), Ile190, and Ile231 contribute to the NADP(+) site.

Belongs to the tetrahydrofolate dehydrogenase/cyclohydrolase family. Homodimer.

The catalysed reaction is (6R)-5,10-methylene-5,6,7,8-tetrahydrofolate + NADP(+) = (6R)-5,10-methenyltetrahydrofolate + NADPH. The enzyme catalyses (6R)-5,10-methenyltetrahydrofolate + H2O = (6R)-10-formyltetrahydrofolate + H(+). Its pathway is one-carbon metabolism; tetrahydrofolate interconversion. Functionally, catalyzes the oxidation of 5,10-methylenetetrahydrofolate to 5,10-methenyltetrahydrofolate and then the hydrolysis of 5,10-methenyltetrahydrofolate to 10-formyltetrahydrofolate. This chain is Bifunctional protein FolD 1, found in Rhizorhabdus wittichii (strain DSM 6014 / CCUG 31198 / JCM 15750 / NBRC 105917 / EY 4224 / RW1) (Sphingomonas wittichii).